The primary structure comprises 1246 residues: Probable membrane antigen 3 (1246 aa).

The protein resides in the virion tegument. This is Probable membrane antigen 3 (3) from Saimiri sciureus (Common squirrel monkey).